A 484-amino-acid chain; its full sequence is UDP-N-acetylmuramate--L-alanine ligase (484 aa).

Gly-126–Thr-132 is a binding site for ATP.

Belongs to the MurCDEF family.

The protein localises to the cytoplasm. It catalyses the reaction UDP-N-acetyl-alpha-D-muramate + L-alanine + ATP = UDP-N-acetyl-alpha-D-muramoyl-L-alanine + ADP + phosphate + H(+). Its pathway is cell wall biogenesis; peptidoglycan biosynthesis. Cell wall formation. This is UDP-N-acetylmuramate--L-alanine ligase from Tolumonas auensis (strain DSM 9187 / NBRC 110442 / TA 4).